The primary structure comprises 1489 residues: Type-2 histone deacetylase 1 (1489 aa).

4 stretches are compositionally biased toward low complexity: residues 135–163, 190–259, 281–306, and 325–399; these read NNNN…SPSG, SNGN…SRNL, NIIN…TSTT, and SPTS…NINN. Disordered stretches follow at residues 135-259, 281-556, 915-935, 955-1024, and 1151-1185; these read NNNN…SRNL, NIIN…NYQQ, NNNN…DDQL, NISK…RDRD, and STGI…GEQC. A compositionally biased stretch (polar residues) spans 400–430; it reads VANGTPRPSLQTSRLQGKLPSPQQYNTSPSH. Low complexity-rich tracts occupy residues 431–450, 486–553, 915–928, and 959–988; these read QQYP…PIQS, NNNN…NNSN, and NNNN…NNNN. Basic and acidic residues-rich tracts occupy residues 989 to 1001 and 1010 to 1024; these read RNRD…ERDN and IEKE…RDRD. Low complexity predominate over residues 1158 to 1180; that stretch reads STSTPITTTGTATVTPGSTTSST. His1232 (proton acceptor) is an active-site residue. The span at 1325–1335 shows a compositional bias: acidic residues; sequence EQNDYDDDDNN. The interval 1325–1374 is disordered; it reads EQNDYDDDDNNNDVNNNNNNNNNNNNNNNNNNNNKNNNNNNSNSITQQST. Low complexity predominate over residues 1336-1367; the sequence is NDVNNNNNNNNNNNNNNNNNNNNKNNNNNNSN.

Belongs to the histone deacetylase family. HD type 2 subfamily.

It localises to the nucleus. The protein localises to the cytoplasm. The catalysed reaction is N(6)-acetyl-L-lysyl-[histone] + H2O = L-lysyl-[histone] + acetate. Responsible for the deacetylation of lysine residues on the N-terminal part of the core histones (H2A, H2B, H3 and H4). Histone deacetylation plays an important role in transcriptional regulation, cell cycle progression and developmental events. Histone deacetylases act via the formation of large multiprotein complexes. This chain is Type-2 histone deacetylase 1 (hdaD), found in Dictyostelium discoideum (Social amoeba).